The chain runs to 1479 residues: ABC transporter ecdL (1479 aa).

3 helical membrane-spanning segments follow: residues 32–52, 82–102, and 142–162; these read LLFE…SVAL, LSNA…WLSF, and IASI…VEAM. N-linked (GlcNAc...) asparagine glycosylation is found at Asn183 and Asn234. The next 2 helical transmembrane spans lie at 251 to 271 and 291 to 311; these read WGGF…PFLV and SGLI…TAAF. The 278-residue stretch at 258 to 535 folds into the ABC transmembrane type-1 1 domain; that stretch reads LCLIGVNYAQ…FVESLMGLRQ (278 aa). Residue Asn345 is glycosylated (N-linked (GlcNAc...) asparagine). 2 helical membrane-spanning segments follow: residues 365-382 and 391-411; these read LHET…LWLL and VAAA…SGLL. Asn427 carries N-linked (GlcNAc...) asparagine glycosylation. 2 consecutive transmembrane segments (helical) span residues 469 to 489 and 503 to 523; these read LLVA…TFAF and PLLA…GQAV. One can recognise an ABC transporter 1 domain in the interval 607-835; that stretch reads IVLQNHTASW…GSSLRLEELV (229 aa). Asn611 and Asn628 each carry an N-linked (GlcNAc...) asparagine glycan. ATP is bound at residue 641-648; sequence GPIGSGKS. N-linked (GlcNAc...) asparagine glycans are attached at residues Asn793 and Asn797. A run of 5 helical transmembrane segments spans residues 885 to 905, 955 to 975, 1028 to 1048, 1052 to 1072, and 1135 to 1155; these read TIGW…VVAL, LFAV…LHLM, ALIG…VIVY, YLAA…MFYL, and IWLT…LVSI. Residues 932-1193 form the ABC transmembrane type-1 2 domain; sequence IWLKFWTEAN…LVYNWTALEN (262 aa). Asn1161 is a glycosylation site (N-linked (GlcNAc...) asparagine). The helical transmembrane segment at 1165–1185 threads the bilayer; sequence ASIGLALVNLIAFGANMKGLV. Residue Asn1187 is glycosylated (N-linked (GlcNAc...) asparagine). The 232-residue stretch at 1230-1461 folds into the ABC transporter 2 domain; the sequence is IKFKSVTASY…RSIFASLLRS (232 aa). 1264–1271 serves as a coordination point for ATP; that stretch reads GRTGCGKS. The tract at residues 1460–1479 is disordered; the sequence is RSGDEEPGNGHKHESEGEEE. Basic and acidic residues predominate over residues 1461–1479; the sequence is SGDEEPGNGHKHESEGEEE.

This sequence belongs to the ABC transporter superfamily. ABCC family. Conjugate transporter (TC 3.A.1.208) subfamily.

The protein localises to the cell membrane. ABC transporter; part of the gene cluster that mediates the biosynthesis of echinocandin B, a fungal lipidated cyclic hexapeptide that acts as an antifungal agent. The sequence is that of ABC transporter ecdL from Aspergillus rugulosus (Emericella rugulosa).